The primary structure comprises 519 residues: Ubiquitin carboxyl-terminal hydrolase 30 (519 aa).

The Mitochondrial intermembrane segment spans residues Met1–Trp52. The helical transmembrane segment at Gly53–Ile73 threads the bilayer. Topologically, residues Ser74–Lys519 are cytoplasmic. The USP domain occupies Pro85–Ile504. Residue Cys94 is the Nucleophile of the active site. The disordered stretch occupies residues Ser379–Thr405. His455 (proton acceptor) is an active-site residue.

It belongs to the peptidase C19 family.

Its subcellular location is the mitochondrion outer membrane. It catalyses the reaction Thiol-dependent hydrolysis of ester, thioester, amide, peptide and isopeptide bonds formed by the C-terminal Gly of ubiquitin (a 76-residue protein attached to proteins as an intracellular targeting signal).. Its function is as follows. Deubiquitinating enzyme that acts as a key inhibitor of mitophagy by counteracting the action of parkin (PRKN). The sequence is that of Ubiquitin carboxyl-terminal hydrolase 30 (usp30) from Xenopus tropicalis (Western clawed frog).